A 245-amino-acid chain; its full sequence is 4-hydroxy-tetrahydrodipicolinate reductase (245 aa).

NAD(+) is bound by residues 7-12, 75-77, and 102-105; these read GAKGKV, GTT, and APNF. The Proton donor/acceptor role is filled by histidine 132. (S)-2,3,4,5-tetrahydrodipicolinate is bound at residue histidine 133. Lysine 136 functions as the Proton donor in the catalytic mechanism. (S)-2,3,4,5-tetrahydrodipicolinate is bound at residue 142-143; it reads GT.

This sequence belongs to the DapB family.

Its subcellular location is the cytoplasm. It catalyses the reaction (S)-2,3,4,5-tetrahydrodipicolinate + NAD(+) + H2O = (2S,4S)-4-hydroxy-2,3,4,5-tetrahydrodipicolinate + NADH + H(+). The catalysed reaction is (S)-2,3,4,5-tetrahydrodipicolinate + NADP(+) + H2O = (2S,4S)-4-hydroxy-2,3,4,5-tetrahydrodipicolinate + NADPH + H(+). It functions in the pathway amino-acid biosynthesis; L-lysine biosynthesis via DAP pathway; (S)-tetrahydrodipicolinate from L-aspartate: step 4/4. In terms of biological role, catalyzes the conversion of 4-hydroxy-tetrahydrodipicolinate (HTPA) to tetrahydrodipicolinate. The protein is 4-hydroxy-tetrahydrodipicolinate reductase of Mycobacterium ulcerans (strain Agy99).